The chain runs to 327 residues: Acetyl-coenzyme A carboxylase carboxyl transferase subunit beta (327 aa).

The CoA carboxyltransferase N-terminal domain maps to 24 to 293 (LWIKCPDTGQ…LTVTTAVEAP (270 aa)). Low complexity predominate over residues 293-311 (PAEAAAKAEPEATTTEQPV). Residues 293-327 (PAEAAAKAEPEATTTEQPVAPAPTEPPAQPAAPQA) form a disordered region. Over residues 312–327 (APAPTEPPAQPAAPQA) the composition is skewed to pro residues.

This sequence belongs to the AccD/PCCB family. In terms of assembly, acetyl-CoA carboxylase is a heterohexamer composed of biotin carboxyl carrier protein (AccB), biotin carboxylase (AccC) and two subunits each of ACCase subunit alpha (AccA) and ACCase subunit beta (AccD).

It localises to the cytoplasm. It catalyses the reaction N(6)-carboxybiotinyl-L-lysyl-[protein] + acetyl-CoA = N(6)-biotinyl-L-lysyl-[protein] + malonyl-CoA. It participates in lipid metabolism; malonyl-CoA biosynthesis; malonyl-CoA from acetyl-CoA: step 1/1. Its function is as follows. Component of the acetyl coenzyme A carboxylase (ACC) complex. Biotin carboxylase (BC) catalyzes the carboxylation of biotin on its carrier protein (BCCP) and then the CO(2) group is transferred by the transcarboxylase to acetyl-CoA to form malonyl-CoA. The sequence is that of Acetyl-coenzyme A carboxylase carboxyl transferase subunit beta from Rhodopseudomonas palustris (strain TIE-1).